The primary structure comprises 397 residues: UDP-galactose translocator (397 aa).

A disordered region spans residues 1-21 (MAAVGSGGSNAAAGPGAVSAG). 10 helical membrane-spanning segments follow: residues 3-23 (AVGSGGSNAAAGPGAVSAGSL), 37-57 (YISLAVLVVQNASLILSIRYA), 65-85 (FFATTAVVMAEVLKGLTCLLL), 97-117 (LALFLHEAVLVQYVDTLKLAV), 140-160 (TFQVTYQLKILTTALFSVLML), 169-189 (WASLLLLFTGVAIVQAQQAGG), 200-220 (GAGLAAVVASCLSSGFAGVYF), 238-258 (LGLFGTALGLVGLWWAEGTAV), 269-289 (PAVWGVVLNQAFGGLLVAVVV), and 315-335 (LFGFHVDPLFALGAGLVIGAV). Over residues 9–21 (SNAAAGPGAVSAG) the composition is skewed to low complexity. A disordered region spans residues 355–397 (ASASTSGPCTHQQPPGQPPPPKLSSHRADLSTEPFLPKSVLVK).

Belongs to the nucleotide-sugar transporter family. SLC35A subfamily. Interacts with SLC35A3; the interaction is reduced in the presence of SLC35A4. Found in a complex with SLC35A3 and SLC35A4.

Its subcellular location is the golgi apparatus membrane. It carries out the reaction UMP(out) + UDP-alpha-D-galactose(in) = UMP(in) + UDP-alpha-D-galactose(out). The catalysed reaction is UDP-N-acetyl-alpha-D-galactosamine(in) + UMP(out) = UDP-N-acetyl-alpha-D-galactosamine(out) + UMP(in). The enzyme catalyses UMP(out) + UDP-alpha-D-glucose(in) = UMP(in) + UDP-alpha-D-glucose(out). It catalyses the reaction UMP(out) + UDP-N-acetyl-alpha-D-glucosamine(in) = UMP(in) + UDP-N-acetyl-alpha-D-glucosamine(out). It carries out the reaction UDP-alpha-D-galactose(in) + AMP(out) = UDP-alpha-D-galactose(out) + AMP(in). The catalysed reaction is UDP-alpha-D-galactose(in) + CMP(out) = UDP-alpha-D-galactose(out) + CMP(in). The enzyme catalyses UDP-N-acetyl-alpha-D-galactosamine(out) + UDP-alpha-D-galactose(in) = UDP-N-acetyl-alpha-D-galactosamine(in) + UDP-alpha-D-galactose(out). It catalyses the reaction UDP-N-acetyl-alpha-D-glucosamine(out) + UDP-alpha-D-galactose(in) = UDP-N-acetyl-alpha-D-glucosamine(in) + UDP-alpha-D-galactose(out). It carries out the reaction UDP-alpha-D-galactose(in) + UDP-alpha-D-glucose(out) = UDP-alpha-D-galactose(out) + UDP-alpha-D-glucose(in). The catalysed reaction is UMP(out) + CMP(in) = UMP(in) + CMP(out). The enzyme catalyses UMP(out) + AMP(in) = UMP(in) + AMP(out). Functionally, transports uridine diphosphate galactose (UDP-galactose) from the cytosol into the Golgi apparatus, functioning as an antiporter that exchanges UDP-galactose for UMP. It is also able to exchange UDP-galactose for AMP and CMP, and to transport UDP-N-acetylgalactosamine (UDP-GalNAc) and other nucleotide sugars. As a provider of UDP-galactose to galactosyltransferases present in the Golgi apparatus, it is necessary for globotriaosylceramide/globoside (Gb3Cer) synthesis from lactosylceramide. In Canis lupus familiaris (Dog), this protein is UDP-galactose translocator.